A 421-amino-acid chain; its full sequence is 3-phosphoshikimate 1-carboxyvinyltransferase (421 aa).

Residues Lys20, Ser21, and Arg25 each contribute to the 3-phosphoshikimate site. Lys20 is a binding site for phosphoenolpyruvate. Gly90 and Arg117 together coordinate phosphoenolpyruvate. 3-phosphoshikimate is bound by residues Ser162, Ser163, Gln164, Ser190, Asp304, and Lys331. Residue Gln164 coordinates phosphoenolpyruvate. The Proton acceptor role is filled by Asp304. Residues Arg335 and Arg376 each coordinate phosphoenolpyruvate.

It belongs to the EPSP synthase family. Monomer.

The protein resides in the cytoplasm. The enzyme catalyses 3-phosphoshikimate + phosphoenolpyruvate = 5-O-(1-carboxyvinyl)-3-phosphoshikimate + phosphate. The protein operates within metabolic intermediate biosynthesis; chorismate biosynthesis. Functionally, catalyzes the transfer of the enolpyruvyl moiety of phosphoenolpyruvate (PEP) to the 5-hydroxyl of shikimate-3-phosphate (S3P) to produce enolpyruvyl shikimate-3-phosphate and inorganic phosphate. The sequence is that of 3-phosphoshikimate 1-carboxyvinyltransferase from Methanothrix thermoacetophila (strain DSM 6194 / JCM 14653 / NBRC 101360 / PT) (Methanosaeta thermophila).